Consider the following 496-residue polypeptide: Cytochrome P450 71B12 (496 aa).

The chain crosses the membrane as a helical span at residues Ser2–Ile22. Cys436 provides a ligand contact to heme.

It belongs to the cytochrome P450 family. It depends on heme as a cofactor.

The protein resides in the membrane. The protein is Cytochrome P450 71B12 (CYP71B12) of Arabidopsis thaliana (Mouse-ear cress).